The following is a 354-amino-acid chain: Adenine deaminase (354 aa).

Zn(2+) contacts are provided by H20, H22, and H200. E203 acts as the Proton donor in catalysis. Residue D281 coordinates Zn(2+). D282 is a substrate binding site.

This sequence belongs to the metallo-dependent hydrolases superfamily. Adenosine and AMP deaminases family. Adenine deaminase type 2 subfamily. Zn(2+) is required as a cofactor.

The enzyme catalyses adenine + H2O + H(+) = hypoxanthine + NH4(+). Its function is as follows. Catalyzes the hydrolytic deamination of adenine to hypoxanthine. Plays an important role in the purine salvage pathway and in nitrogen catabolism. The polypeptide is Adenine deaminase (Cupriavidus metallidurans (strain ATCC 43123 / DSM 2839 / NBRC 102507 / CH34) (Ralstonia metallidurans)).